The chain runs to 1212 residues: Dermatan-sulfate epimerase-like protein (1212 aa).

The first 20 residues, 1–20 (MALMFTGHLLFLALLMFAFS), serve as a signal peptide directing secretion. Residues Asn-28, Asn-666, Asn-688, and Asn-709 are each glycosylated (N-linked (GlcNAc...) asparagine). The next 2 helical transmembrane spans lie at 764 to 784 (IIFP…CISL) and 803 to 823 (WILI…WSTC). Residue Asn-874 is glycosylated (N-linked (GlcNAc...) asparagine).

The protein belongs to the dermatan-sulfate isomerase family. As to expression, expressed in different brain areas as well as in multiple other peripheral tissues.

The protein resides in the membrane. This Homo sapiens (Human) protein is Dermatan-sulfate epimerase-like protein (DSEL).